The primary structure comprises 341 residues: Biotin synthase (341 aa).

Positions 40 to 264 (NSVKLNYLVN…VAPRSELRIA (225 aa)) constitute a Radical SAM core domain. The [4Fe-4S] cluster site is built by C55, C59, and C62. [2Fe-2S] cluster-binding residues include C99, C132, C192, and R262. Residues 317–341 (ASAPQGGVEPVLRKRGAGTELQPNA) form a disordered region.

It belongs to the radical SAM superfamily. Biotin synthase family. Homodimer. Requires [4Fe-4S] cluster as cofactor. [2Fe-2S] cluster is required as a cofactor.

It catalyses the reaction (4R,5S)-dethiobiotin + (sulfur carrier)-SH + 2 reduced [2Fe-2S]-[ferredoxin] + 2 S-adenosyl-L-methionine = (sulfur carrier)-H + biotin + 2 5'-deoxyadenosine + 2 L-methionine + 2 oxidized [2Fe-2S]-[ferredoxin]. It functions in the pathway cofactor biosynthesis; biotin biosynthesis; biotin from 7,8-diaminononanoate: step 2/2. Functionally, catalyzes the conversion of dethiobiotin (DTB) to biotin by the insertion of a sulfur atom into dethiobiotin via a radical-based mechanism. This is Biotin synthase from Renibacterium salmoninarum (strain ATCC 33209 / DSM 20767 / JCM 11484 / NBRC 15589 / NCIMB 2235).